A 253-amino-acid chain; its full sequence is Mediator of RNA polymerase II transcription subunit 10 (253 aa).

3 disordered regions span residues 32–63, 88–109, and 206–253; these read YDTNPSSSNNNTPTSSRASGGGGGGGGGHASS, LPSSPSSGPSNNQPQQGTTELE, and VEAT…QSGQ. The span at 34-47 shows a compositional bias: low complexity; it reads TNPSSSNNNTPTSS. A compositionally biased stretch (gly residues) spans 50–60; the sequence is SGGGGGGGGGH. Over residues 88 to 104 the composition is skewed to low complexity; the sequence is LPSSPSSGPSNNQPQQG. Gly residues predominate over residues 231-253; it reads SAGGEGQQGQGQGQQGQGQQSGQ.

Belongs to the Mediator complex subunit 10 family. In terms of assembly, component of the Mediator complex.

It is found in the nucleus. In terms of biological role, component of the Mediator complex, a coactivator involved in the regulated transcription of nearly all RNA polymerase II-dependent genes. Mediator functions as a bridge to convey information from gene-specific regulatory proteins to the basal RNA polymerase II transcription machinery. Mediator is recruited to promoters by direct interactions with regulatory proteins and serves as a scaffold for the assembly of a functional preinitiation complex with RNA polymerase II and the general transcription factors. In Neurospora crassa (strain ATCC 24698 / 74-OR23-1A / CBS 708.71 / DSM 1257 / FGSC 987), this protein is Mediator of RNA polymerase II transcription subunit 10 (nut2).